Consider the following 191-residue polypeptide: dCTP deaminase, dUMP-forming (191 aa).

DCTP-binding positions include 101 to 106 (KSSLGR), Asp-119, 127 to 129 (TLE), Gln-148, Tyr-162, and Gln-174. The Proton donor/acceptor role is filled by Glu-129. Positions 169 to 191 (SRYQGQRGPTASRSFQNFHRTQV) are disordered. Over residues 171–191 (YQGQRGPTASRSFQNFHRTQV) the composition is skewed to polar residues.

The protein belongs to the dCTP deaminase family. Homotrimer.

It carries out the reaction dCTP + 2 H2O = dUMP + NH4(+) + diphosphate. The protein operates within pyrimidine metabolism; dUMP biosynthesis; dUMP from dCTP: step 1/1. In terms of biological role, bifunctional enzyme that catalyzes both the deamination of dCTP to dUTP and the hydrolysis of dUTP to dUMP without releasing the toxic dUTP intermediate. The protein is dCTP deaminase, dUMP-forming of Streptomyces griseus subsp. griseus (strain JCM 4626 / CBS 651.72 / NBRC 13350 / KCC S-0626 / ISP 5235).